A 118-amino-acid polypeptide reads, in one-letter code: Large ribosomal subunit protein bL20 (118 aa).

This sequence belongs to the bacterial ribosomal protein bL20 family.

Its function is as follows. Binds directly to 23S ribosomal RNA and is necessary for the in vitro assembly process of the 50S ribosomal subunit. It is not involved in the protein synthesizing functions of that subunit. The polypeptide is Large ribosomal subunit protein bL20 (Francisella tularensis subsp. novicida (strain U112)).